The sequence spans 245 residues: DNA polymerase sliding clamp 2 (245 aa).

This sequence belongs to the PCNA family. In terms of assembly, forms homodimers with PCNA1, which then recruit PCNA3; does not form homotrimers. The heterodimers interact with RfcS homotetramers. Heterotrimer which circularizes head-to-tail (head is at N-terminus, tail is at C-terminus) to form a toroid; DNA passes through its center. Replication factor C (RFC) is required to load the toroid on the DNA. This subunit interacts with DNA polymerase I (dpo1). The heterotrimer also interacts with flap endonuclease 1, DNA ligase and XPF via the other subunits.

One of the sliding clamp subunits that acts as a moving platform for DNA processing. Responsible for tethering the catalytic subunit of DNA polymerase to DNA during high-speed replication. Heterotrimer stimulates the Holliday junction resolvase Hjc. DNA polymerase I, DNA ligase and the flap endonuclease may be constitutively associated with the PCNA heterotrimer forming a scanning complex able to couple DNA synthesis and Okazaki fragment maturation. This chain is DNA polymerase sliding clamp 2, found in Saccharolobus solfataricus (strain ATCC 35092 / DSM 1617 / JCM 11322 / P2) (Sulfolobus solfataricus).